The following is a 503-amino-acid chain: ATP synthase subunit alpha (503 aa).

Residue 170-177 coordinates ATP; it reads GDRQTGKT.

It belongs to the ATPase alpha/beta chains family. In terms of assembly, F-type ATPases have 2 components, CF(1) - the catalytic core - and CF(0) - the membrane proton channel. CF(1) has five subunits: alpha(3), beta(3), gamma(1), delta(1), epsilon(1). CF(0) has three main subunits: a(1), b(2) and c(9-12). The alpha and beta chains form an alternating ring which encloses part of the gamma chain. CF(1) is attached to CF(0) by a central stalk formed by the gamma and epsilon chains, while a peripheral stalk is formed by the delta and b chains.

The protein resides in the cell inner membrane. The catalysed reaction is ATP + H2O + 4 H(+)(in) = ADP + phosphate + 5 H(+)(out). Functionally, produces ATP from ADP in the presence of a proton gradient across the membrane. The alpha chain is a regulatory subunit. The sequence is that of ATP synthase subunit alpha from Pseudothermotoga lettingae (strain ATCC BAA-301 / DSM 14385 / NBRC 107922 / TMO) (Thermotoga lettingae).